We begin with the raw amino-acid sequence, 202 residues long: Pyridoxal 5'-phosphate synthase subunit PdxT (202 aa).

Residue 49–51 (GES) participates in L-glutamine binding. Cys81 (nucleophile) is an active-site residue. L-glutamine-binding positions include Arg110 and 139-140 (IR). Residues His182 and Glu184 each act as charge relay system in the active site.

This sequence belongs to the glutaminase PdxT/SNO family. As to quaternary structure, in the presence of PdxS, forms a dodecamer of heterodimers. Only shows activity in the heterodimer.

The enzyme catalyses aldehydo-D-ribose 5-phosphate + D-glyceraldehyde 3-phosphate + L-glutamine = pyridoxal 5'-phosphate + L-glutamate + phosphate + 3 H2O + H(+). It catalyses the reaction L-glutamine + H2O = L-glutamate + NH4(+). It functions in the pathway cofactor biosynthesis; pyridoxal 5'-phosphate biosynthesis. Catalyzes the hydrolysis of glutamine to glutamate and ammonia as part of the biosynthesis of pyridoxal 5'-phosphate. The resulting ammonia molecule is channeled to the active site of PdxS. The chain is Pyridoxal 5'-phosphate synthase subunit PdxT from Rhodococcus jostii (strain RHA1).